We begin with the raw amino-acid sequence, 506 residues long: Histidine ammonia-lyase (506 aa).

The segment at residues 144 to 146 (ASG) is a cross-link (5-imidazolinone (Ala-Gly)). The residue at position 145 (Ser145) is a 2,3-didehydroalanine (Ser).

Belongs to the PAL/histidase family. Contains an active site 4-methylidene-imidazol-5-one (MIO), which is formed autocatalytically by cyclization and dehydration of residues Ala-Ser-Gly.

Its subcellular location is the cytoplasm. The enzyme catalyses L-histidine = trans-urocanate + NH4(+). It functions in the pathway amino-acid degradation; L-histidine degradation into L-glutamate; N-formimidoyl-L-glutamate from L-histidine: step 1/3. The protein is Histidine ammonia-lyase of Legionella pneumophila subsp. pneumophila (strain Philadelphia 1 / ATCC 33152 / DSM 7513).